A 500-amino-acid chain; its full sequence is uncharacterized protein (500 aa).

An N-terminal signal peptide occupies residues 1–20 (MHSIIFKAAVALLGVSTAAG). N43 carries N-linked (GlcNAc...) asparagine glycosylation. The FAD-binding PCMH-type domain occupies 60–232 (TALRPDCIIA…TAFTVKTHTQ (173 aa)). H98 is subject to Pros-8alpha-FAD histidine. 5 N-linked (GlcNAc...) asparagine glycosylation sites follow: N194, N201, N246, N299, and N414.

The protein belongs to the oxygen-dependent FAD-linked oxidoreductase family. FAD serves as cofactor.

Its subcellular location is the secreted. This is an uncharacterized protein from Arthroderma benhamiae (strain ATCC MYA-4681 / CBS 112371) (Trichophyton mentagrophytes).